We begin with the raw amino-acid sequence, 151 residues long: Large ribosomal subunit protein eL8 (151 aa).

The protein belongs to the eukaryotic ribosomal protein eL8 family. As to quaternary structure, part of the 50S ribosomal subunit. Probably part of the RNase P complex.

The protein resides in the cytoplasm. Its function is as follows. Multifunctional RNA-binding protein that recognizes the K-turn motif in ribosomal RNA, the RNA component of RNase P, box H/ACA, box C/D and box C'/D' sRNAs. This Pyrobaculum neutrophilum (strain DSM 2338 / JCM 9278 / NBRC 100436 / V24Sta) (Thermoproteus neutrophilus) protein is Large ribosomal subunit protein eL8.